A 264-amino-acid polypeptide reads, in one-letter code: Small ribosomal subunit protein uS2 (264 aa).

Belongs to the universal ribosomal protein uS2 family.

The polypeptide is Small ribosomal subunit protein uS2 (Synechococcus sp. (strain JA-2-3B'a(2-13)) (Cyanobacteria bacterium Yellowstone B-Prime)).